Here is a 142-residue protein sequence, read N- to C-terminus: Dromaiocalcin-2 (142 aa).

Disulfide bonds link cysteine 6-cysteine 17, cysteine 34-cysteine 138, and cysteine 113-cysteine 130. Residues 13-139 (FDGRCYGFFP…CSDRKPFICA (127 aa)) form the C-type lectin domain. Phosphoserine occurs at positions 62 and 68.

Post-translationally, a minor form with some unmodified Ser-68 and partial phosphorylation of Ser-66 may also occur.

It is found in the secreted. The protein localises to the extracellular space. It localises to the extracellular matrix. This chain is Dromaiocalcin-2, found in Dromaius novaehollandiae (Emu).